Reading from the N-terminus, the 276-residue chain is Undecaprenyl-diphosphatase 2 (276 aa).

The next 7 membrane-spanning stretches (helical) occupy residues 3–23 (IWDI…EYAP), 48–68 (AANT…AFVF), 92–112 (LSIA…FLFE), 119–139 (LFSV…MLAA), 196–216 (ADFT…LSLI), 225–245 (DLLP…LFVV), and 255–275 (IKLV…FILF).

Belongs to the UppP family.

The protein resides in the cell membrane. The enzyme catalyses di-trans,octa-cis-undecaprenyl diphosphate + H2O = di-trans,octa-cis-undecaprenyl phosphate + phosphate + H(+). In terms of biological role, catalyzes the dephosphorylation of undecaprenyl diphosphate (UPP). Confers resistance to bacitracin. This chain is Undecaprenyl-diphosphatase 2, found in Bacillus licheniformis (strain ATCC 14580 / DSM 13 / JCM 2505 / CCUG 7422 / NBRC 12200 / NCIMB 9375 / NCTC 10341 / NRRL NRS-1264 / Gibson 46).